A 186-amino-acid polypeptide reads, in one-letter code: Photosystem I assembly protein Ycf4 (186 aa).

2 helical membrane-spanning segments follow: residues W26 to F46 and I66 to I86.

This sequence belongs to the Ycf4 family.

The protein localises to the plastid. The protein resides in the chloroplast thylakoid membrane. In terms of biological role, seems to be required for the assembly of the photosystem I complex. This Pyropia yezoensis (Susabi-nori) protein is Photosystem I assembly protein Ycf4.